The chain runs to 238 residues: Uridylate kinase (238 aa).

An ATP-binding site is contributed by Lys12–Gly15. Gly54 contributes to the UMP binding site. ATP-binding residues include Gly55 and Arg59. UMP is bound by residues Asp74 and Thr135 to Thr142. The ATP site is built by Thr162, Tyr168, and Asp171.

Belongs to the UMP kinase family. As to quaternary structure, homohexamer.

It is found in the cytoplasm. The enzyme catalyses UMP + ATP = UDP + ADP. It participates in pyrimidine metabolism; CTP biosynthesis via de novo pathway; UDP from UMP (UMPK route): step 1/1. Inhibited by UTP. Its function is as follows. Catalyzes the reversible phosphorylation of UMP to UDP. This chain is Uridylate kinase, found in Aromatoleum aromaticum (strain DSM 19018 / LMG 30748 / EbN1) (Azoarcus sp. (strain EbN1)).